Here is a 75-residue protein sequence, read N- to C-terminus: uncharacterized protein (75 aa).

The helical transmembrane segment at 4–26 (PSLLFLGFSGVLAFGEVGWVGVY) threads the bilayer.

The protein resides in the membrane. This is an uncharacterized protein from Treponema pallidum (strain Nichols).